The following is a 151-amino-acid chain: Putative pre-16S rRNA nuclease (151 aa).

It belongs to the YqgF nuclease family.

It is found in the cytoplasm. In terms of biological role, could be a nuclease involved in processing of the 5'-end of pre-16S rRNA. This chain is Putative pre-16S rRNA nuclease, found in Neisseria meningitidis serogroup C (strain 053442).